The sequence spans 116 residues: UPF0102 protein IL0423 (116 aa).

The protein belongs to the UPF0102 family.

The polypeptide is UPF0102 protein IL0423 (Idiomarina loihiensis (strain ATCC BAA-735 / DSM 15497 / L2-TR)).